Consider the following 384-residue polypeptide: Calreticulin-3 (384 aa).

The first 19 residues, 1-19 (MAAARVPLWAICVRRVALA), serve as a signal peptide directing secretion. The segment at 20–197 (TVYFQEEFLD…GQSIESGSIE (178 aa)) is N-domain. The N-linked (GlcNAc...) asparagine glycan is linked to asparagine 42. The cysteines at positions 105 and 137 are disulfide-linked. Residues tyrosine 109, lysine 111, tyrosine 128, and aspartate 135 each contribute to the an alpha-D-glucoside site. 7 tandem repeats follow at residues 191 to 202 (IESGSIEYDWQL), 209 to 220 (EKASAEAEGWDQ), 222 to 231 (AKDKSQDWEK), 235 to 246 (DASASKPSDWKG), 250 to 260 (GDWQAAMLQKP), 264 to 272 (DGLKPEGID), and 274 to 284 (DVWLHQKMKNS). The segment at 191-246 (IESGSIEYDWQLTSLKKMEKASAEAEGWDQAAKDKSQDWEKHFLDASASKPSDWKG) is 4 X approximate repeats. The tract at residues 198-294 (YDWQLTSLKK…YLTEYDLSEF (97 aa)) is P-domain. The 3 X approximate repeats stretch occupies residues 250-284 (GDWQAAMLQKPPYQDGLKPEGIDKDVWLHQKMKNS). Residues 295–384 (ENIGAVGLEL…FKGFHRRNEF (90 aa)) are C-domain. An alpha-D-glucoside is bound at residue glutamate 303. Residues 381-384 (RNEF) carry the Prevents secretion from ER motif.

This sequence belongs to the calreticulin family. As to quaternary structure, component of an EIF2 complex at least composed of CELF1/CUGBP1, CALR, CALR3, EIF2S1, EIF2S2, HSP90B1 and HSPA5.

The protein resides in the endoplasmic reticulum lumen. Functionally, during spermatogenesis, may act as a lectin-independent chaperone for specific client proteins such as ADAM3. CALR3 capacity for calcium-binding may be absent or much lower than that of CALR. Required for sperm fertility. The protein is Calreticulin-3 (CALR3) of Bos taurus (Bovine).